A 103-amino-acid chain; its full sequence is Co-chaperonin GroES (103 aa).

The protein belongs to the GroES chaperonin family. As to quaternary structure, heptamer of 7 subunits arranged in a ring. Interacts with the chaperonin GroEL.

The protein resides in the cytoplasm. In terms of biological role, together with the chaperonin GroEL, plays an essential role in assisting protein folding. The GroEL-GroES system forms a nano-cage that allows encapsulation of the non-native substrate proteins and provides a physical environment optimized to promote and accelerate protein folding. GroES binds to the apical surface of the GroEL ring, thereby capping the opening of the GroEL channel. The polypeptide is Co-chaperonin GroES (Prochlorococcus marinus (strain MIT 9215)).